The primary structure comprises 241 residues: MNFRDKAIILKKRNIKENLAIVTVLTQSYGIYSGIIKDLHSKKNTIIYQIGNIVDFCWSARLDEHLGTINCELVKSYSYLIMSNKRNLLYTHSLIELTLMSFKERELHANLFEKWLENLESINTGNINVKNYINFELLILKEAGYRLNLDRCGVTNCTQNLIYVSPKSGQAISATVGEPYKHKLLLLPKFLVHNNCEPEDIYEIQAAFNLTAYFFNKYILIKKKLPITRELLLKSILEYSF.

This sequence belongs to the RecO family.

Functionally, involved in DNA repair and RecF pathway recombination. The chain is DNA repair protein RecO from Orientia tsutsugamushi (strain Ikeda) (Rickettsia tsutsugamushi).